The following is a 210-amino-acid chain: Endo-1,4-beta-xylanase A (210 aa).

An N-terminal signal peptide occupies residues 1 to 19 (MKLKKKMLTLLLTASMSFG). A GH11 domain is found at 20–210 (LFGATSSAAT…SSGRSNVTVW (191 aa)). Residue Glu104 is the Nucleophile of the active site. Glu197 (proton donor) is an active-site residue.

Belongs to the glycosyl hydrolase 11 (cellulase G) family.

It carries out the reaction Endohydrolysis of (1-&gt;4)-beta-D-xylosidic linkages in xylans.. Its pathway is glycan degradation; xylan degradation. The sequence is that of Endo-1,4-beta-xylanase A (xynA) from Geobacillus stearothermophilus (Bacillus stearothermophilus).